Here is a 121-residue protein sequence, read N- to C-terminus: Large ribosomal subunit protein bL12 (121 aa).

It belongs to the bacterial ribosomal protein bL12 family. As to quaternary structure, homodimer. Part of the ribosomal stalk of the 50S ribosomal subunit. Forms a multimeric L10(L12)X complex, where L10 forms an elongated spine to which 2 to 4 L12 dimers bind in a sequential fashion. Binds GTP-bound translation factors.

Functionally, forms part of the ribosomal stalk which helps the ribosome interact with GTP-bound translation factors. Is thus essential for accurate translation. The polypeptide is Large ribosomal subunit protein bL12 (Leuconostoc citreum (strain KM20)).